An 895-amino-acid chain; its full sequence is MKKVFGQTVRDLKREVNKKVLKVPGVEQKVLDATSNEPWGPHGSLLADLAQASRNYHEYQLIMVVIWKRLSDTGKNWRHVYKALTVLEYMVGHGSERVIDEIRERAYQISTLSDFQYIDSGGRDQGSNVRKKSQSLVALVNDKERIAEVRQKAAANRDKYRSSAPGGMYKPSGGYGDKYDYGSRDEERSSYGREREYGYRDDDRNSRDGDRHSRDSEDRYGRDGNRDDDYRGRSRSVDNYGSRGRSSEREREDDGHSSSRGSGARADDNSQDGRGGLQRKFSEQNIGAPPSYEEAVSDSRSPVYSERDGGETPQVTAPGAASPPPPQVAAPEAASPPTGTNTANTTATFVNESPSQKVETFDEFDPRSAFSAGPPAYASTDGVTAPPTVTSMSAPTTSNSVEMDLLGSLADVFSSNALAIVPADSIYVETNGQANAGPAPSFSTSQPSTQSFDDPFGDSPFKAFTSTDTDSTPQQNFGASFQPPPPAFTSEVSHPDTAHNFGFGDSFSAVANPDPASQNVQPPSNSPGFPQEQFATSQSGIDILAGILPPSGPPVQSGPSIPTSQFPPSGNNMYEGFHSQPPVSTAPNLPGQTPFGQAVQPYNMVPHSQNMTGAMPFNSGGFMHQPGSQTPYSTPSGPAGQFMAHQGHGMPPSHGPQRTQSGPVTLQGNNNVMGDMFSQATPNSLTSSSSHPDLTPLTGAIEIVPPPQKKFEPKSSVWADTLSRGLVNFNISGSKTNPLADIGVDFEAINRREKRLEKQTNTPATSTINMGKAMGSGTGLGRSGATAMRPPPNPMTGSGMPMGGGMGVGSYGGMNQNQPMGMGMGAGMNQNQPMGMGMGPGMNMNMNMGGYGQGYPMQPQNPGMVPSPNMPGNNYNPMMGQGGYNPQQSYGGGYR.

Residues 18 to 150 (KKVLKVPGVE…NDKERIAEVR (133 aa)) enclose the ENTH domain. 3 stretches are compositionally biased toward basic and acidic residues: residues 150–161 (RQKAAANRDKYR), 177–236 (DKYD…RSRS), and 245–257 (RSSE…DGHS). The tract at residues 150-396 (RQKAAANRDK…PTVTSMSAPT (247 aa)) is disordered. Phosphoserine is present on residues Ser-270 and Ser-282. Positions 329–348 (AAPEAASPPTGTNTANTTAT) are enriched in low complexity. 2 stretches are compositionally biased toward polar residues: residues 349-358 (FVNESPSQKV) and 387-396 (PTVTSMSAPT). The Clathrin binding signature appears at 409-413 (LADVF). Disordered stretches follow at residues 436–533 (AGPA…PQEQ) and 758–784 (KQTN…GRSG). The segment covering 440–454 (PSFSTSQPSTQSFDD) has biased composition (low complexity). The short motif at 454-456 (DPF) is the ALPHA-ADR binding element. Polar residues-rich tracts occupy residues 464-479 (FTST…NFGA), 515-533 (PASQ…PQEQ), and 759-769 (QTNTPATSTIN).

It belongs to the epsin family. In terms of assembly, interacts with clathrin, VTI12, DELTA-ADR and ALPHA-ADR.

The protein localises to the golgi apparatus. It is found in the cytoplasmic vesicle. Its subcellular location is the clathrin-coated vesicle. May have a role in transport via clathrin-coated vesicles from the trans-Golgi network to endosomes. Stimulates clathrin assembly. Binds to membranes enriched in phosphatidylinositol 3-phosphate (PtdIns(3)P). Plays an important role in protein trafficking. The chain is Clathrin interactor EPSIN 2 (EPSIN2) from Arabidopsis thaliana (Mouse-ear cress).